Consider the following 271-residue polypeptide: Chymotrypsin-like elastase family member 2A (271 aa).

An N-terminal signal peptide occupies residues 1–16 (MIRTLLLSALVAGALS). Positions 17-30 (CGYPTYEVEDDVSR) are cleaved as a propeptide — activation peptide. A Peptidase S1 domain is found at 31 to 269 (VVGGQEATPN…YIDWINSVMA (239 aa)). A disulfide bond links Cys-60 and Cys-76. Active-site charge relay system residues include His-75 and Asp-123. Disulfide bonds link Cys-157–Cys-224, Cys-188–Cys-204, and Cys-214–Cys-245. The active-site Charge relay system is the Ser-218.

Belongs to the peptidase S1 family. Elastase subfamily. Interacts with CPA1. Interacts with SERPINA1. Highly expressed in pancreas (at mRNA and protein levels). Also expressed in adrenal gland and small intestine.

It localises to the secreted. The enzyme catalyses Preferential cleavage: Leu-|-Xaa, Met-|-Xaa and Phe-|-Xaa. Hydrolyzes elastin.. In terms of biological role, elastase that enhances insulin signaling and might have a physiologic role in cellular glucose metabolism. Circulates in plasma and reduces platelet hyperactivation, triggers both insulin secretion and degradation, and increases insulin sensitivity. The sequence is that of Chymotrypsin-like elastase family member 2A from Mus musculus (Mouse).